A 356-amino-acid polypeptide reads, in one-letter code: tRNA N6-adenosine threonylcarbamoyltransferase (356 aa).

His-115 and His-119 together coordinate Fe cation. Substrate is bound by residues 138–142 (LVSGG), Asp-171, Gly-184, and Asn-283. Fe cation is bound at residue Asp-311.

The protein belongs to the KAE1 / TsaD family. Requires Fe(2+) as cofactor.

It localises to the cytoplasm. The catalysed reaction is L-threonylcarbamoyladenylate + adenosine(37) in tRNA = N(6)-L-threonylcarbamoyladenosine(37) in tRNA + AMP + H(+). Required for the formation of a threonylcarbamoyl group on adenosine at position 37 (t(6)A37) in tRNAs that read codons beginning with adenine. Is involved in the transfer of the threonylcarbamoyl moiety of threonylcarbamoyl-AMP (TC-AMP) to the N6 group of A37, together with TsaE and TsaB. TsaD likely plays a direct catalytic role in this reaction. The polypeptide is tRNA N6-adenosine threonylcarbamoyltransferase (Prochlorococcus marinus (strain NATL1A)).